A 353-amino-acid polypeptide reads, in one-letter code: MIDADRLITAVGGRDRDEQLDRAIRPLSLADYIGQPTVREQMELFIQAARGRSEALDHTLIFGPPGLGKTTLANIIAQEMGVSIKSTSGPVLERPGDLAAILTNLEPNDVLFIDEIHRLSPIVEEVLYPAMEDFQLDIMIGEGPAARSIKLDLPPFTLVGATTRAGMLTNPLRDRFGIVQRLEFYNIADLSTIVARSAGILGLVIEPAGAFEIARRARGTPRIANRLLRRVRDFAQVRGNGQITRQTADKALNLLDVDEHGFDHQDRRLLLTMIEKFDGGPVGVDSLAAAISEERHTIEDVLEPYLIQQGYIMRTPRGRVVTRHAYLHFGLNIPTRMGEMPVAGEFVDDAADL.

The tract at residues 4-185 (ADRLITAVGG…FGIVQRLEFY (182 aa)) is large ATPase domain (RuvB-L). ATP-binding positions include I24, R25, G66, K69, T70, T71, 132–134 (EDF), R175, Y185, and R222. Residue T70 coordinates Mg(2+). The tract at residues 186-256 (NIADLSTIVA…TADKALNLLD (71 aa)) is small ATPAse domain (RuvB-S). A head domain (RuvB-H) region spans residues 259–353 (EHGFDHQDRR…GEFVDDAADL (95 aa)). The DNA site is built by R295, R314, and R319.

The protein belongs to the RuvB family. As to quaternary structure, homohexamer. Forms an RuvA(8)-RuvB(12)-Holliday junction (HJ) complex. HJ DNA is sandwiched between 2 RuvA tetramers; dsDNA enters through RuvA and exits via RuvB. An RuvB hexamer assembles on each DNA strand where it exits the tetramer. Each RuvB hexamer is contacted by two RuvA subunits (via domain III) on 2 adjacent RuvB subunits; this complex drives branch migration. In the full resolvosome a probable DNA-RuvA(4)-RuvB(12)-RuvC(2) complex forms which resolves the HJ.

The protein localises to the cytoplasm. The catalysed reaction is ATP + H2O = ADP + phosphate + H(+). Its function is as follows. The RuvA-RuvB-RuvC complex processes Holliday junction (HJ) DNA during genetic recombination and DNA repair, while the RuvA-RuvB complex plays an important role in the rescue of blocked DNA replication forks via replication fork reversal (RFR). RuvA specifically binds to HJ cruciform DNA, conferring on it an open structure. The RuvB hexamer acts as an ATP-dependent pump, pulling dsDNA into and through the RuvAB complex. RuvB forms 2 homohexamers on either side of HJ DNA bound by 1 or 2 RuvA tetramers; 4 subunits per hexamer contact DNA at a time. Coordinated motions by a converter formed by DNA-disengaged RuvB subunits stimulates ATP hydrolysis and nucleotide exchange. Immobilization of the converter enables RuvB to convert the ATP-contained energy into a lever motion, pulling 2 nucleotides of DNA out of the RuvA tetramer per ATP hydrolyzed, thus driving DNA branch migration. The RuvB motors rotate together with the DNA substrate, which together with the progressing nucleotide cycle form the mechanistic basis for DNA recombination by continuous HJ branch migration. Branch migration allows RuvC to scan DNA until it finds its consensus sequence, where it cleaves and resolves cruciform DNA. This chain is Holliday junction branch migration complex subunit RuvB, found in Pseudomonas syringae pv. tomato (strain ATCC BAA-871 / DC3000).